A 198-amino-acid chain; its full sequence is NAD(P)H dehydrogenase (quinone) (198 aa).

Residues valine 4–valine 189 enclose the Flavodoxin-like domain. Residues serine 10–valine 15 and threonine 78–phenylalanine 80 each bind FMN. Tyrosine 12 serves as a coordination point for NAD(+). Residue tryptophan 98 participates in substrate binding. FMN is bound by residues serine 113–glycine 118 and histidine 133.

This sequence belongs to the WrbA family. Requires FMN as cofactor.

The enzyme catalyses a quinone + NADH + H(+) = a quinol + NAD(+). The catalysed reaction is a quinone + NADPH + H(+) = a quinol + NADP(+). The sequence is that of NAD(P)H dehydrogenase (quinone) from Halorhodospira halophila (strain DSM 244 / SL1) (Ectothiorhodospira halophila (strain DSM 244 / SL1)).